Reading from the N-terminus, the 314-residue chain is uncharacterized protein (314 aa).

Residues 1-20 (MKKRAGIWAALLLAAVMLAG) form the signal peptide. C21 carries the N-palmitoyl cysteine lipid modification. The S-diacylglycerol cysteine moiety is linked to residue C21. The Fe/B12 periplasmic-binding domain maps to 59-311 (KIVSLMPSNT…ELAESIYPDT (253 aa)).

This sequence belongs to the bacterial solute-binding protein 8 family. In terms of assembly, the complex is composed of two ATP-binding proteins (YvrA), two transmembrane proteins (YvrB) and a solute-binding protein (YvrC).

It localises to the cell membrane. Functionally, probably part of an ABC transporter complex. This is an uncharacterized protein from Bacillus subtilis (strain 168).